Reading from the N-terminus, the 1191-residue chain is DNA-directed RNA polymerase subunit beta (1191 aa).

The disordered stretch occupies residues 1164 to 1191 (EEEDLQPADALNIAPQPDTEEEPVESFE). Acidic residues predominate over residues 1181-1191 (DTEEEPVESFE).

The protein belongs to the RNA polymerase beta chain family. In terms of assembly, the RNAP catalytic core consists of 2 alpha, 1 beta, 1 beta' and 1 omega subunit. When a sigma factor is associated with the core the holoenzyme is formed, which can initiate transcription.

The enzyme catalyses RNA(n) + a ribonucleoside 5'-triphosphate = RNA(n+1) + diphosphate. Its function is as follows. DNA-dependent RNA polymerase catalyzes the transcription of DNA into RNA using the four ribonucleoside triphosphates as substrates. In Lysinibacillus sphaericus (strain C3-41), this protein is DNA-directed RNA polymerase subunit beta.